Consider the following 122-residue polypeptide: MKLLSGLLLCSLVLGVSGQGWFSFIGEAVRGAGDMWRAYSDMREANYINADKYFHARGNYDAAQRGPGGVWAAKVISDVREDLQRLMGHGAEDSMADQAANEWGRSGKDPNHFRPKGLPDKY.

The N-terminal stretch at 1–18 (MKLLSGLLLCSLVLGVSG) is a signal peptide. Position 19 is a pyrrolidone carboxylic acid (Gln19). Residues 90-122 (GAEDSMADQAANEWGRSGKDPNHFRPKGLPDKY) are disordered. Positions 105–122 (RSGKDPNHFRPKGLPDKY) are enriched in basic and acidic residues.

The protein belongs to the SAA family. Apolipoprotein of the HDL complex. As to expression, expressed by the liver; secreted in plasma.

It is found in the secreted. Its function is as follows. Major acute phase reactant. This chain is Serum amyloid A-2 protein (SAA2), found in Oryctolagus cuniculus (Rabbit).